A 427-amino-acid polypeptide reads, in one-letter code: Mitochondrial distribution and morphology protein 10 (427 aa).

Residues 393–414 (SSYANSQATAGAQGSSGGPPTS) are compositionally biased toward low complexity. Positions 393 to 427 (SSYANSQATAGAQGSSGGPPTSYWRGVGVSVSYSS) are disordered.

The protein belongs to the MDM10 family. Component of the ER-mitochondria encounter structure (ERMES) or MDM complex, composed of mmm1, mdm10, mdm12 and mdm34. Associates with the mitochondrial outer membrane sorting assembly machinery SAM(core) complex.

The protein localises to the mitochondrion outer membrane. Its function is as follows. Component of the ERMES/MDM complex, which serves as a molecular tether to connect the endoplasmic reticulum and mitochondria. Components of this complex are involved in the control of mitochondrial shape and protein biogenesis and may function in phospholipid exchange. mdm10 is involved in the late assembly steps of the general translocase of the mitochondrial outer membrane (TOM complex). Functions in the tom40-specific route of the assembly of outer membrane beta-barrel proteins, including the association of tom40 with the receptor tom22 and small TOM proteins. Can associate with the SAM(core) complex as well as the mdm12-mmm1 complex, both involved in late steps of the major beta-barrel assembly pathway, that is responsible for biogenesis of all outer membrane beta-barrel proteins. May act as a switch that shuttles between both complexes and channels precursor proteins into the tom40-specific pathway. Plays a role in mitochondrial morphology and in the inheritance of mitochondria. The protein is Mitochondrial distribution and morphology protein 10 (mdmB) of Emericella nidulans (strain FGSC A4 / ATCC 38163 / CBS 112.46 / NRRL 194 / M139) (Aspergillus nidulans).